The primary structure comprises 211 residues: Metalloproteinase inhibitor 3 (211 aa).

An N-terminal signal peptide occupies residues 1–23 (MTPWLGLVVLLGSWSLGDWGAEA). Cys24 contacts Zn(2+). Involved in metalloproteinase-binding stretches follow at residues 24 to 27 (CTCS) and 88 to 89 (ES). Intrachain disulfides connect Cys24/Cys91, Cys26/Cys118, Cys36/Cys143, Cys145/Cys192, Cys150/Cys155, and Cys163/Cys184. The NTR domain occupies 24–143 (CTCSPSHPQD…GLNYRYHLGC (120 aa)). The tract at residues 105-188 (TGRVYDGKMY…SKHYACIRQK (84 aa)) is mediates interaction with EFEMP1. N-linked (GlcNAc...) asparagine glycosylation occurs at Asn207.

The protein belongs to the protease inhibitor I35 (TIMP) family. As to quaternary structure, interacts with EFEMP1. Interacts with KDR.

It is found in the secreted. The protein resides in the extracellular space. Its subcellular location is the extracellular matrix. Mediates a variety of processes including matrix regulation and turnover, inflammation, and angiogenesis, through reversible inhibition of zinc protease superfamily enzymes, primarily matrix metalloproteinases (MMPs). Regulates extracellular matrix (ECM) remodeling through inhibition of matrix metalloproteinases (MMP) including MMP-1, MMP-2, MMP-3, MMP-7, MMP-9, MMP-13, MMP-14 and MMP-15. Additionally, modulates the processing of amyloid precursor protein (APP) and apolipoprotein E receptor ApoER2 by inhibiting two alpha-secretases ADAM10 and ADAM17. Functions as a tumor suppressor and a potent inhibitor of angiogenesis. Exerts its anti-angiogenic effect by directly interacting with vascular endothelial growth factor (VEGF) receptor-2/KDR, preventing its binding to the VEGFA ligand. Selectively induces apoptosis in angiogenic endothelial cells through a caspase-independent cell death pathway. Mechanistically, inhibits matrix-induced focal adhesion kinase PTK2 tyrosine phosphorylation and association with paxillin/PXN and disrupts the incorporation of ITGB3, PTK2 and PXN into focal adhesion contacts on the matrix. This Bos taurus (Bovine) protein is Metalloproteinase inhibitor 3 (TIMP3).